The sequence spans 97 residues: Cytochrome c2 iso-2 (97 aa).

Heme c contacts are provided by C10, C13, H14, and M75.

This sequence belongs to the cytochrome c family. In terms of processing, binds 1 heme c group covalently per subunit.

In terms of biological role, cytochrome c2 is found mainly in purple, non-sulfur, photosynthetic bacteria where it functions as the electron donor to the oxidized bacteriochlorophyll in the photophosphorylation pathway. However, it may also have a role in the respiratory chain and is found in some non-photosynthetic bacteria. The sequence is that of Cytochrome c2 iso-2 from Magnetospirillum molischianum (Rhodospirillum molischianum).